The chain runs to 95 residues: Aspartyl/glutamyl-tRNA(Asn/Gln) amidotransferase subunit C (95 aa).

This sequence belongs to the GatC family. As to quaternary structure, heterotrimer of A, B and C subunits.

It carries out the reaction L-glutamyl-tRNA(Gln) + L-glutamine + ATP + H2O = L-glutaminyl-tRNA(Gln) + L-glutamate + ADP + phosphate + H(+). The enzyme catalyses L-aspartyl-tRNA(Asn) + L-glutamine + ATP + H2O = L-asparaginyl-tRNA(Asn) + L-glutamate + ADP + phosphate + 2 H(+). Its function is as follows. Allows the formation of correctly charged Asn-tRNA(Asn) or Gln-tRNA(Gln) through the transamidation of misacylated Asp-tRNA(Asn) or Glu-tRNA(Gln) in organisms which lack either or both of asparaginyl-tRNA or glutaminyl-tRNA synthetases. The reaction takes place in the presence of glutamine and ATP through an activated phospho-Asp-tRNA(Asn) or phospho-Glu-tRNA(Gln). This Dinoroseobacter shibae (strain DSM 16493 / NCIMB 14021 / DFL 12) protein is Aspartyl/glutamyl-tRNA(Asn/Gln) amidotransferase subunit C.